A 943-amino-acid chain; its full sequence is Nuclear factor of activated T-cells, cytoplasmic 1 (943 aa).

The segment at 22 to 48 (GRGETLGPAPRAGGTMKSAEEEHYGYA) is disordered. The segment at 118-123 (PRIEIT) is calcineurin-binding. The tract at residues 126-218 (LGLYHNNNQF…CVSPKTTDPE (93 aa)) is transactivation domain A (TAD-A). Residues 200 to 298 (PQTSPWQSPC…GSPRVSVTDD (99 aa)) form a disordered region. Polar residues predominate over residues 201-214 (QTSPWQSPCVSPKT). A run of 2 repeats spans residues 203-219 (SPWQ…DPEE) and 233-249 (SPRH…VTEE). Positions 203–298 (SPWQSPCVSP…GSPRVSVTDD (96 aa)) are 3 X SP repeats. Ser233 and Ser237 each carry phosphoserine. Residues 236–248 (HSPSTSPRASVTE) show a composition bias toward polar residues. Ser245 is modified (phosphoserine; by PKA). The Nuclear localization signal signature appears at 265–267 (KRK). At Ser269 the chain carries Phosphoserine; by PKA. The segment covering 276–288 (PYSPHHSPTPSPH) has biased composition (pro residues). Repeat 3 spans residues 282–298 (SPTPSPHGSPRVSVTDD). At Ser294 the chain carries Phosphoserine; by PKA. Residues 310–321 (SAIVAAINALTT) carry the Nuclear export signal motif. In terms of domain architecture, RHD spans 410–592 (PTLPALDWQL…NPIECSQRSA (183 aa)). A DNA-binding region spans residues 439–446 (RAHYETEG). The short motif at 682 to 684 (KRK) is the Nuclear localization signal element. The segment at 703 to 943 (TEPTDDYEPA…NDLSSTSTHS (241 aa)) is transactivation domain B (TAD-B). Residues 787 to 912 (HLGLPQPAGE…SPNLAPIPVT (126 aa)) are disordered. A compositionally biased stretch (pro residues) spans 846–855 (SPSPPLPPAT). Residues 924-933 (YLDDVNEIIR) carry the Nuclear export signal motif.

Member of the multicomponent NFATC transcription complex that consists of at least two components, a pre-existing cytoplasmic component NFATC2 and an inducible nuclear component NFATC1. Other members such as NFATC4, NFATC3 or members of the activating protein-1 family, MAF, GATA4 and Cbp/p300 can also bind the complex. NFATC proteins bind to DNA as monomers. Interacts with HOMER2 and HOMER3; this interaction may compete with calcineurin/PPP3CA-binding and hence prevent NFATC1 dephosphorylation and activation. Interacts with TLE6/GRG6. Phosphorylated by NFATC-kinase and GSK3B; phosphorylation induces NFATC1 nuclear exit and dephosphorylation by calcineurin promotes nuclear import. Phosphorylation by PKA and DYRK2 negatively modulates nuclear accumulation, and promotes subsequent phosphorylation by GSK3B or casein kinase 1. As to expression, expressed in thymus, peripheral leukocytes as T-cells and spleen. Isoforms A are preferentially expressed in effector T-cells (thymus and peripheral leukocytes) whereas isoforms B and isoforms C are preferentially expressed in naive T-cells (spleen). Isoforms B are expressed in naive T-cells after first antigen exposure and isoforms A are expressed in effector T-cells after second antigen exposure. Isoforms IA are widely expressed but not detected in liver nor pancreas, neural expression is strongest in corpus callosum. Isoforms IB are expressed mostly in muscle, cerebellum, placenta and thymus, neural expression in fetal and adult brain, strongest in corpus callosum.

It localises to the cytoplasm. Its subcellular location is the nucleus. Functionally, plays a role in the inducible expression of cytokine genes in T-cells, especially in the induction of the IL-2 or IL-4 gene transcription. Also controls gene expression in embryonic cardiac cells. Could regulate not only the activation and proliferation but also the differentiation and programmed death of T-lymphocytes as well as lymphoid and non-lymphoid cells. Required for osteoclastogenesis and regulates many genes important for osteoclast differentiation and function. This Homo sapiens (Human) protein is Nuclear factor of activated T-cells, cytoplasmic 1 (NFATC1).